A 227-amino-acid chain; its full sequence is PKHD-type hydroxylase Bcep18194_B0892 (227 aa).

The region spanning 78-178 (KVFPPLFNRY…RVASFFWIQS (101 aa)) is the Fe2OG dioxygenase domain. Fe cation is bound by residues His-96, Asp-98, and His-159. Position 169 (Arg-169) interacts with 2-oxoglutarate.

Fe(2+) is required as a cofactor. The cofactor is L-ascorbate.

In Burkholderia lata (strain ATCC 17760 / DSM 23089 / LMG 22485 / NCIMB 9086 / R18194 / 383), this protein is PKHD-type hydroxylase Bcep18194_B0892.